Here is a 331-residue protein sequence, read N- to C-terminus: Cytosolic 5'-nucleotidase 3A (331 aa).

Catalysis depends on aspartate 83, which acts as the Nucleophile. 2 residues coordinate Mg(2+): aspartate 83 and aspartate 85. Aspartate 85 (proton donor) is an active-site residue. Residue glutamate 130 coordinates CMP. N(7)-methyl-GMP is bound by residues glutamate 130 and serine 151. Residues 198 to 199 (SA) and lysine 247 each bind substrate. A Mg(2+)-binding site is contributed by aspartate 272.

This sequence belongs to the pyrimidine 5'-nucleotidase family.

It is found in the cytoplasm. It catalyses the reaction N(7)-methyl-GMP + H2O = N(7)-methylguanosine + phosphate. The enzyme catalyses a ribonucleoside 5'-phosphate + H2O = a ribonucleoside + phosphate. Nucleotidase which shows specific activity towards cytidine monophosphate (CMP) and 7-methylguanosine monophosphate (m(7)GMP). CMP seems to be the preferred substrate. In Gallus gallus (Chicken), this protein is Cytosolic 5'-nucleotidase 3A (NT5C3A).